The primary structure comprises 207 residues: Shikimate kinase (207 aa).

32–37 (GVGKST) lines the ATP pocket. Ser36 contributes to the Mg(2+) binding site. 3 residues coordinate substrate: Asp54, Arg78, and Gly100. An ATP-binding site is contributed by Arg138. Arg157 provides a ligand contact to substrate.

It belongs to the shikimate kinase family. In terms of assembly, monomer. Requires Mg(2+) as cofactor.

The protein resides in the cytoplasm. The catalysed reaction is shikimate + ATP = 3-phosphoshikimate + ADP + H(+). Its pathway is metabolic intermediate biosynthesis; chorismate biosynthesis; chorismate from D-erythrose 4-phosphate and phosphoenolpyruvate: step 5/7. In terms of biological role, catalyzes the specific phosphorylation of the 3-hydroxyl group of shikimic acid using ATP as a cosubstrate. The protein is Shikimate kinase of Bradyrhizobium diazoefficiens (strain JCM 10833 / BCRC 13528 / IAM 13628 / NBRC 14792 / USDA 110).